Reading from the N-terminus, the 759-residue chain is TSK-associating protein 1 (759 aa).

An N-terminal signal peptide occupies residues 1 to 29 (MEIYTMKTNFLVLALSLCILLSSFHEVSC). The interval 55 to 74 (GKDDEDQSAKIQSENQNNTT) is disordered. Polar residues predominate over residues 63 to 74 (AKIQSENQNNTT). EFE repeat repeat units lie at residues 91–138 (VGSV…DEEL), 139–176 (SAHR…DEEH), 177–215 (SAKR…DEEH), 216–254 (SAKR…DEEQ), 255–293 (SAKR…EEEH), 294–329 (AAKG…DKEH), 330–368 (FTAA…DDEQ), 369–407 (SAKR…NEEQ), 408–443 (SAKR…LEEE), and 444–473 (SAKR…DKEE). Positions 91-473 (VGSVSDESVG…GINAKADKEE (383 aa)) are 10 X approximate EFE repeat. Coiled-coil stretches lie at residues 142 to 461 (RQKM…FEEA) and 685 to 734 (IKKL…AKDE). 4 disordered regions span residues 154–184 (EAAS…QSLL), 200–219 (QLKV…SAKR), 271–332 (AASK…HFTA), and 393–414 (LKAN…RKSM).

As to quaternary structure, homomultimer. Interacts (via C-terminal domain) with GIP1, CSN1 (via N-terminal domain) and TSK (via TPR repeats). Post-translationally, binds calcium through the EFE repeats. In terms of tissue distribution, expressed preferentially in flowers and shoot apex.

The protein localises to the endoplasmic reticulum lumen. Its subcellular location is the nucleus envelope. It localises to the cytoplasm. Its function is as follows. Involved in seedling development in the dark. May be involved, when interacting with TSK, in the organization of spindle microtubules and may participate, when interacting with GIP1, in structural links between the nuclear envelope and the cytoskeleton. The polypeptide is TSK-associating protein 1 (TSA1) (Arabidopsis thaliana (Mouse-ear cress)).